We begin with the raw amino-acid sequence, 630 residues long: Peptidyl-prolyl cis-trans isomerase cyp15 (630 aa).

The segment at 1 to 46 is disordered; the sequence is MPEDSNTNDNNKRPLEDNNAVDGESDDDIGPMLPPPPGEDAPRKKK. WD repeat units lie at residues 70 to 108, 113 to 152, 157 to 198, 203 to 242, and 258 to 301; these read MHRDVLSQVAVTKKDFIITTSVDGHLKFWKKTASGIEFV, SHLSSIVDISISANHELLATISDDTTLKVYDITNFDMINM, YKPK…KPLH, MHSKPVHIIEFNSRFNCVVSVDAIGMIEYWSPEAPFALPD, and RKKK…REYD. The PPIase cyclophilin-type domain maps to 475–629; it reads LGTSAIIRTT…DDIKIINIDI (155 aa).

This sequence belongs to the cyclophilin-type PPIase family.

The enzyme catalyses [protein]-peptidylproline (omega=180) = [protein]-peptidylproline (omega=0). Its function is as follows. PPIases accelerate the folding of proteins. It catalyzes the cis-trans isomerization of proline imidic peptide bonds in oligopeptides. The protein is Peptidyl-prolyl cis-trans isomerase cyp15 (cyp15) of Rhizopus delemar (strain RA 99-880 / ATCC MYA-4621 / FGSC 9543 / NRRL 43880) (Mucormycosis agent).